Consider the following 496-residue polypeptide: MRINPTTSGPMISTLEEKNLGRIVQIIGPVLDALFPPGKMPNIYNALVVKGRAGQQINVTCEVQQLLGNNRVRAVAMSATDGLMRGMEVIDTGAPLSVPVGGATLGRIFNVLGEPVDNLGPVDTRTTSPIHRSAPAFIQLDTKLSIFETGIKVVDLLAPYRRGGKIGLFGGAGVGKTVLIMELINNIAKAHGGVSVFGGVGERTREGNDLYIEMKESGVINEKNIAESKVALVYGQMNEPPGARMRVGLTALTMAEYFRDVNEQDVLLFIDNIFRFVQAGSEVSALLGRMPSAVGYQPTLSTEMGSLQERITSTKEGSITSIQAVYVPADDLTDPAPATTFAHLDATTVLSRGLAAKGIYPAVDPLDSTSTMLQPGIVGEEHYETAQKVKQTSQRYKELQDIIAILGLDELSEEDRLTVARARKIERFLSQPFFVAEVFTGSPGKYVGLAETIRGFQLILSGELDSLPEQAFYLVGNIDEATAKAMNLEVENKLKK.

170–177 (GGAGVGKT) contacts ATP.

Belongs to the ATPase alpha/beta chains family. As to quaternary structure, F-type ATPases have 2 components, CF(1) - the catalytic core - and CF(0) - the membrane proton channel. CF(1) has five subunits: alpha(3), beta(3), gamma(1), delta(1), epsilon(1). CF(0) has four main subunits: a(1), b(1), b'(1) and c(9-12).

The protein resides in the plastid. The protein localises to the chloroplast thylakoid membrane. It catalyses the reaction ATP + H2O + 4 H(+)(in) = ADP + phosphate + 5 H(+)(out). Produces ATP from ADP in the presence of a proton gradient across the membrane. The catalytic sites are hosted primarily by the beta subunits. This chain is ATP synthase subunit beta, chloroplastic, found in Dioscorea elephantipes (Elephant's foot yam).